Here is a 151-residue protein sequence, read N- to C-terminus: Protein ECM12 (151 aa).

Asparagine 2 is a glycosylation site (N-linked (GlcNAc...) asparagine). 2 helical membrane passes run 17-37 and 51-71; these read LLVF…IFFF and AFLA…VGFF. N-linked (GlcNAc...) asparagine glycans are attached at residues asparagine 132 and asparagine 137.

Its subcellular location is the membrane. In terms of biological role, may be involved in cell wall organization and biogenesis. The sequence is that of Protein ECM12 (ECM12) from Saccharomyces cerevisiae (strain ATCC 204508 / S288c) (Baker's yeast).